The chain runs to 364 residues: 4-hydroxythreonine-4-phosphate dehydrogenase (364 aa).

Substrate contacts are provided by H138 and T139. A divalent metal cation is bound by residues H169, H214, and H269. The substrate site is built by K277, N286, and R295.

Belongs to the PdxA family. Homodimer. The cofactor is a divalent metal cation.

It is found in the cytoplasm. The enzyme catalyses 4-(phosphooxy)-L-threonine + NAD(+) = 3-amino-2-oxopropyl phosphate + CO2 + NADH. Its pathway is cofactor biosynthesis; pyridoxine 5'-phosphate biosynthesis; pyridoxine 5'-phosphate from D-erythrose 4-phosphate: step 4/5. In terms of biological role, catalyzes the NAD(P)-dependent oxidation of 4-(phosphooxy)-L-threonine (HTP) into 2-amino-3-oxo-4-(phosphooxy)butyric acid which spontaneously decarboxylates to form 3-amino-2-oxopropyl phosphate (AHAP). The chain is 4-hydroxythreonine-4-phosphate dehydrogenase from Bacteroides thetaiotaomicron (strain ATCC 29148 / DSM 2079 / JCM 5827 / CCUG 10774 / NCTC 10582 / VPI-5482 / E50).